Here is a 502-residue protein sequence, read N- to C-terminus: tRNA-specific adenosine deaminase 1 (502 aa).

An A to I editase domain is found at 63–501 (SMGTGTKCIG…IRNPPDYHQF (439 aa)). Residue histidine 87 coordinates Zn(2+). Glutamate 89 serves as the catalytic Proton donor. 1D-myo-inositol hexakisphosphate contacts are provided by arginine 93 and arginine 94. Cysteine 142 contacts Zn(2+). The disordered stretch occupies residues 174–194 (SSNLEAPGNERKCEDPDSPVT). At serine 191 the chain carries Phosphoserine. Cysteine 299 serves as a coordination point for Zn(2+). Residues lysine 302, arginine 305, lysine 435, and lysine 470 each contribute to the 1D-myo-inositol hexakisphosphate site.

The protein belongs to the ADAT1 family. 1D-myo-inositol hexakisphosphate is required as a cofactor. As to expression, ubiquitously expressed.

The enzyme catalyses adenosine(37) in tRNA(Ala) + H2O + H(+) = inosine(37) in tRNA(Ala) + NH4(+). Specifically deaminates adenosine-37 to inosine in tRNA-Ala. The chain is tRNA-specific adenosine deaminase 1 (ADAT1) from Homo sapiens (Human).